The following is a 1000-amino-acid chain: Vacuolar sorting protein 39 (1000 aa).

Residues proline 16 to valine 282 enclose the CNH domain. Positions aspartate 394–serine 413 are disordered. One copy of the CHCR repeat lies at tyrosine 607–aspartate 796. The tract at residues glycine 844–glutamate 864 is disordered.

Belongs to the VAM6/VPS39 family. In terms of assembly, homooligomer. Component of the homotypic fusion and vacuole protein sorting (HOPS) complex composed of the class C Vps core proteins VPS11, VCL1, VPS18 and VPS33, which in HOPS further associates with VPS39 and VPS41. Interacts directly with VPS11. Binds to RABG3B.

It localises to the cytoplasm. It is found in the vacuole membrane. Its function is as follows. Essential protein required during embryogenesis. Believed to act in part as a component of the putative HOPS endosomal tethering complex. HOPS is required for the central vacuole formation. May play a role in clustering and fusion of late endosomes and lysosomes. Plays a role in vesicle-mediated protein trafficking to lysosomal compartments including the endocytic membrane transport and autophagic pathways. Required for fusion of endosomes and autophagosomes with lysosomes. The polypeptide is Vacuolar sorting protein 39 (Arabidopsis thaliana (Mouse-ear cress)).